Here is a 281-residue protein sequence, read N- to C-terminus: N-methyltransferase tcpN (281 aa).

The protein belongs to the methyltransferase superfamily. LaeA methyltransferase family.

The protein operates within secondary metabolite biosynthesis. In terms of biological role, N-methyltransferase; part of the gene cluster that mediates the biosynthesis of an unusual class of epipolythiodioxopiperazines (ETPs) lacking the reactive thiol group important for toxicity. Firstly, L-tyrosine is prenylated by tcpD, before undergoing condensation with L-glycine in a reaction catalyzed by the NRPS tcpP leading to the diketopiperazine (DKP) backbone. Afterwards the alpha-carbon of tyrosine is oxidized by the cytochrome P450 tcpC to form a hydroxyl group. However, in contrast other ETP biosynthesis pathways studied so far, tcpC is not able to bishydroxylate the DKP at both alpha-carbon positions, but hydroxylates the alpha-carbon of the tyrosine part and the nitrogen of the glycine part. The next steps involve an alpha,beta-elimination reaction catalyzed by tcpI, a methylation by the methyltransferase tcpN the action of the four enzyme cascade tcpG/K/J/I. Due to a dysfunctional cytochrome P450 monooxygenase tcpC, the pathway leads to the biosynthesis of probable non-toxic metabolites lacking the reactive thiol group. The polypeptide is N-methyltransferase tcpN (Claviceps purpurea (strain 20.1) (Ergot fungus)).